The following is a 707-amino-acid chain: Ribosomal RNA large subunit methyltransferase K/L (707 aa).

The 112-residue stretch at 44–155 folds into the THUMP domain; that stretch reads VIYNLCLWSR…NDILTVSFDL (112 aa).

Belongs to the methyltransferase superfamily. RlmKL family.

The protein resides in the cytoplasm. The enzyme catalyses guanosine(2445) in 23S rRNA + S-adenosyl-L-methionine = N(2)-methylguanosine(2445) in 23S rRNA + S-adenosyl-L-homocysteine + H(+). It catalyses the reaction guanosine(2069) in 23S rRNA + S-adenosyl-L-methionine = N(2)-methylguanosine(2069) in 23S rRNA + S-adenosyl-L-homocysteine + H(+). Functionally, specifically methylates the guanine in position 2445 (m2G2445) and the guanine in position 2069 (m7G2069) of 23S rRNA. The sequence is that of Ribosomal RNA large subunit methyltransferase K/L from Legionella pneumophila (strain Corby).